Reading from the N-terminus, the 106-residue chain is Large ribosomal subunit protein bL21 (106 aa).

The protein belongs to the bacterial ribosomal protein bL21 family. In terms of assembly, part of the 50S ribosomal subunit. Contacts protein L20.

In terms of biological role, this protein binds to 23S rRNA in the presence of protein L20. The protein is Large ribosomal subunit protein bL21 of Dichelobacter nodosus (strain VCS1703A).